Consider the following 453-residue polypeptide: Probable exopolygalacturonase B (453 aa).

The signal sequence occupies residues 1–16; that stretch reads MKFFALAALFASTVNS. N-linked (GlcNAc...) asparagine glycans are attached at residues asparagine 185 and asparagine 225. Residue aspartate 255 is the Proton donor of the active site. Cysteines 257 and 274 form a disulfide. N-linked (GlcNAc...) asparagine glycosylation is found at asparagine 263 and asparagine 275. Histidine 278 is a catalytic residue. PbH1 repeat units lie at residues 295-316 and 327-348; these read IENVWIENVTLLNGENGARLKA and INNVTYKNIHVENTDNPIVLDQ. N-linked (GlcNAc...) asparagine glycans are attached at residues asparagine 302, asparagine 329, asparagine 354, and asparagine 366. The PbH1 3 repeat unit spans residues 362-405; sequence PSRVNFTNIVFEDIYGTSSGKRGKVVADLTCSPNAVCSGIRLKN. Cysteine 392 and cysteine 398 form a disulfide bridge. N-linked (GlcNAc...) asparagine glycosylation occurs at asparagine 436.

The protein belongs to the glycosyl hydrolase 28 family.

It localises to the secreted. The catalysed reaction is [(1-&gt;4)-alpha-D-galacturonosyl](n) + H2O = alpha-D-galacturonate + [(1-&gt;4)-alpha-D-galacturonosyl](n-1). Specific in hydrolyzing the terminal glycosidic bond of polygalacturonic acid and oligogalacturonates. The polypeptide is Probable exopolygalacturonase B (pgxB) (Aspergillus fumigatus (strain CBS 144.89 / FGSC A1163 / CEA10) (Neosartorya fumigata)).